Reading from the N-terminus, the 347-residue chain is Heat-inducible transcription repressor HrcA (347 aa).

Belongs to the HrcA family.

Its function is as follows. Negative regulator of class I heat shock genes (grpE-dnaK-dnaJ and groELS operons). Prevents heat-shock induction of these operons. The protein is Heat-inducible transcription repressor HrcA of Sorangium cellulosum (strain So ce56) (Polyangium cellulosum (strain So ce56)).